A 429-amino-acid chain; its full sequence is Homocysteine synthase (429 aa).

The residue at position 210 (lysine 210) is an N6-(pyridoxal phosphate)lysine.

The protein belongs to the trans-sulfuration enzymes family. In terms of assembly, homotetramer. Requires pyridoxal 5'-phosphate as cofactor.

The protein localises to the cytoplasm. It localises to the nucleus. It catalyses the reaction O-acetyl-L-homoserine + methanethiol = L-methionine + acetate + H(+). The enzyme catalyses O-acetyl-L-homoserine + hydrogen sulfide = L-homocysteine + acetate. It participates in amino-acid biosynthesis; L-methionine biosynthesis via de novo pathway; L-homocysteine from O-acetyl-L-homoserine. Catalyzes the conversion of O-acetyl-L-homoserine (OAH) into homocysteine in the methionine biosynthesis pathway. Can also use O-succinyl-L-homoserine and L-homoserine as substrates. Also has cysteine synthase (O-acetylserine sulfhydrylase) activity in vitro, but in S.pombe, it seems only to be involved in the alternative pathway of methionine biosynthesis under cysteine deficiency conditions. The chain is Homocysteine synthase from Schizosaccharomyces pombe (strain 972 / ATCC 24843) (Fission yeast).